The following is a 239-amino-acid chain: Ubiquinone biosynthesis O-methyltransferase (239 aa).

4 residues coordinate S-adenosyl-L-methionine: R42, G62, D83, and M127.

This sequence belongs to the methyltransferase superfamily. UbiG/COQ3 family.

The catalysed reaction is a 3-demethylubiquinol + S-adenosyl-L-methionine = a ubiquinol + S-adenosyl-L-homocysteine + H(+). The enzyme catalyses a 3-(all-trans-polyprenyl)benzene-1,2-diol + S-adenosyl-L-methionine = a 2-methoxy-6-(all-trans-polyprenyl)phenol + S-adenosyl-L-homocysteine + H(+). It participates in cofactor biosynthesis; ubiquinone biosynthesis. In terms of biological role, O-methyltransferase that catalyzes the 2 O-methylation steps in the ubiquinone biosynthetic pathway. This is Ubiquinone biosynthesis O-methyltransferase from Pectobacterium carotovorum subsp. carotovorum (strain PC1).